Here is a 176-residue protein sequence, read N- to C-terminus: ATP-dependent protease subunit HslV (176 aa).

Residue Thr2 is part of the active site. Residues Gly157, Cys160, and Thr163 each coordinate Na(+).

This sequence belongs to the peptidase T1B family. HslV subfamily. A double ring-shaped homohexamer of HslV is capped on each side by a ring-shaped HslU homohexamer. The assembly of the HslU/HslV complex is dependent on binding of ATP.

The protein resides in the cytoplasm. It carries out the reaction ATP-dependent cleavage of peptide bonds with broad specificity.. Allosterically activated by HslU binding. Functionally, protease subunit of a proteasome-like degradation complex believed to be a general protein degrading machinery. In Pseudomonas savastanoi pv. phaseolicola (strain 1448A / Race 6) (Pseudomonas syringae pv. phaseolicola (strain 1448A / Race 6)), this protein is ATP-dependent protease subunit HslV.